The chain runs to 258 residues: Hemin import ATP-binding protein HmuV (258 aa).

The ABC transporter domain maps to 1 to 238; the sequence is MLDIDVSNLS…DILERTYRTP (238 aa). An ATP-binding site is contributed by 34 to 41; it reads GENGAGKS.

Belongs to the ABC transporter superfamily. Heme (hemin) importer (TC 3.A.1.14.5) family. In terms of assembly, the complex is composed of two ATP-binding proteins (HmuV), two transmembrane proteins (HmuU) and a solute-binding protein (HmuT).

The protein localises to the cell inner membrane. Part of the ABC transporter complex HmuTUV involved in hemin import. Responsible for energy coupling to the transport system. This Idiomarina loihiensis (strain ATCC BAA-735 / DSM 15497 / L2-TR) protein is Hemin import ATP-binding protein HmuV.